The sequence spans 123 residues: Methicillin resistance regulatory protein MecI (123 aa).

Residues 7–71 (EISSAEWEVM…KDNKIFQYYS (65 aa)) constitute a DNA-binding region (H-T-H motif). Residues 74–123 (EESDIKYKTSKNFINKVYKGGFNSLVLNFVEKEDLSQDEIEELRNILNKK) form an important for dimerization region.

This sequence belongs to the BlaI transcriptional regulatory family. As to quaternary structure, monomer and homodimer. Post-translationally, upon exposure to beta-lactams, proteolytic cleavage at a single site impairs dimerization and abolishes repressor activity.

It localises to the cytoplasm. Transcriptional repressor that constitutively blocks the transcription of the gene for the penicillin-binding protein MecA. Binds DNA as a dimer. The protein is Methicillin resistance regulatory protein MecI (mecI) of Mammaliicoccus sciuri (Staphylococcus sciuri).